Consider the following 717-residue polypeptide: Polyribonucleotide nucleotidyltransferase (717 aa).

Mg(2+)-binding residues include Asp487 and Asp493. The region spanning 554–613 (PRITVINVPKDKIRDVIGTGGKVIREIVEYSGCKIDIEDDGTIKIAATSDEQAQKAIDRI) is the KH domain. Positions 623–691 (GQIYTGKVVK…DRGKVKLSMR (69 aa)) constitute an S1 motif domain.

It belongs to the polyribonucleotide nucleotidyltransferase family. The cofactor is Mg(2+).

Its subcellular location is the cytoplasm. The catalysed reaction is RNA(n+1) + phosphate = RNA(n) + a ribonucleoside 5'-diphosphate. In terms of biological role, involved in mRNA degradation. Catalyzes the phosphorolysis of single-stranded polyribonucleotides processively in the 3'- to 5'-direction. The protein is Polyribonucleotide nucleotidyltransferase of Acidiphilium cryptum (strain JF-5).